The following is a 288-amino-acid chain: Pyridoxal kinase PdxY (288 aa).

Residues Ser12 and 47 to 48 (TQ) contribute to the substrate site. ATP contacts are provided by residues Asp114, Glu151, Lys184, and 211–214 (RPLL). Asp225 contributes to the substrate binding site.

This sequence belongs to the pyridoxine kinase family. PdxY subfamily. In terms of assembly, homodimer. Mg(2+) is required as a cofactor.

It carries out the reaction pyridoxal + ATP = pyridoxal 5'-phosphate + ADP + H(+). It participates in cofactor metabolism; pyridoxal 5'-phosphate salvage; pyridoxal 5'-phosphate from pyridoxal: step 1/1. In terms of biological role, pyridoxal kinase involved in the salvage pathway of pyridoxal 5'-phosphate (PLP). Catalyzes the phosphorylation of pyridoxal to PLP. The sequence is that of Pyridoxal kinase PdxY from Pseudomonas syringae pv. tomato (strain ATCC BAA-871 / DC3000).